We begin with the raw amino-acid sequence, 432 residues long: Gamma-glutamyl phosphate reductase (432 aa).

The protein belongs to the gamma-glutamyl phosphate reductase family.

Its subcellular location is the cytoplasm. It carries out the reaction L-glutamate 5-semialdehyde + phosphate + NADP(+) = L-glutamyl 5-phosphate + NADPH + H(+). It functions in the pathway amino-acid biosynthesis; L-proline biosynthesis; L-glutamate 5-semialdehyde from L-glutamate: step 2/2. Its function is as follows. Catalyzes the NADPH-dependent reduction of L-glutamate 5-phosphate into L-glutamate 5-semialdehyde and phosphate. The product spontaneously undergoes cyclization to form 1-pyrroline-5-carboxylate. This is Gamma-glutamyl phosphate reductase from Psychrobacter sp. (strain PRwf-1).